The primary structure comprises 555 residues: DNA repair and recombination protein rhm52 (555 aa).

Residues 148 to 152 (KRALR) mediate DNA binding. Disordered regions lie at residues 197–232 (VVAEPRLPPVKPEPSNTASAAPHPPLPPLPEADSFD) and 251–555 (HPDE…MKLN). Residues 260 to 276 (NSHASGSSGNTGASTTN) are compositionally biased toward low complexity. Polar residues-rich tracts occupy residues 283–300 (SGNQSNQQRPMQPSSRMN) and 312–334 (TPNHQINRSGPQNGSINNQQNNH). Composition is skewed to low complexity over residues 354 to 375 (NNNNTSNGTGPHQRPLGNGPQQ) and 382 to 404 (NGAATAPSGAEPVAFFSARAVAR). Positions 468–478 (DNPSNNAGNGV) are enriched in polar residues. A compositionally biased stretch (low complexity) spans 479-490 (QNQPQKPQPSQQ). A compositionally biased stretch (polar residues) spans 491–500 (RGSILNPQFD). Residues 536–547 (PNGTSNGNGTPG) are compositionally biased toward low complexity.

Belongs to the RAD52 family. In terms of assembly, part of a complex that includes RAD51, RAD52 and RAD59.

It is found in the nucleus. Functionally, involved in DNA double-strand break (DSB) repair and recombination. Promotes the annealing of complementary single-stranded DNA and by stimulation of the RAD51 recombinase. The chain is DNA repair and recombination protein rhm52 (RHM52) from Pyricularia oryzae (strain 70-15 / ATCC MYA-4617 / FGSC 8958) (Rice blast fungus).